The primary structure comprises 393 residues: FAD-dependent monooxygenase dbaB (393 aa).

A signal peptide spans 1 to 23; that stretch reads MTRTSPTLPVIILGAGMVGLTLA. Residues Glu37 and Arg107 each contribute to the FAD site. A glycan (N-linked (GlcNAc...) asparagine) is linked at Asn128. The active site involves Tyr221. Residue Asn233 is glycosylated (N-linked (GlcNAc...) asparagine). Asp320 lines the FAD pocket.

Belongs to the paxM FAD-dependent monooxygenase family. Requires FAD as cofactor.

It functions in the pathway secondary metabolite biosynthesis. Functionally, FAD-dependent monooxygenase; part of the gene cluster that mediates the biosynthesis of the antibiotic 2,4-dihydroxy-3-methyl-6-(2-oxopropyl)benzaldehyde (DHMBA) and its derivatives. The direct non-reducing polyketide synthase dbaI product is 2,4-dihydroxy-3-methyl-6-(2-oxopropyl)benzaldehyde (DHMBA), produced by condensation of one acetyl-CoA starter unit with 4 malonyl-CoA units and one methylation step. The FAD-dependent monooxygenase dbaH is responsible for the synthesis of yellow pigments derived from the oxidation of DHMBA. The roles of dbaB, C, E and F have still to be determined. In Emericella nidulans (strain FGSC A4 / ATCC 38163 / CBS 112.46 / NRRL 194 / M139) (Aspergillus nidulans), this protein is FAD-dependent monooxygenase dbaB.